Reading from the N-terminus, the 86-residue chain is Dynein light chain 1, cytoplasmic (86 aa).

It belongs to the dynein light chain family. In terms of assembly, homodimer. Cytoplasmic dynein consists of two catalytic heavy chains (HCs) and a number of non-catalytic subunits which present intermediate chains (ICs), light intermediate chains (LICs) and light chains (LCs). Component of the nuclear pore complex (NPC). NPC constitutes the exclusive means of nucleocytoplasmic transport. NPCs allow the passive diffusion of ions and small molecules and the active, nuclear transport receptor-mediated bidirectional transport of macromolecules such as proteins, RNAs, ribonucleoparticles (RNPs), and ribosomal subunits across the nuclear envelope. Due to its 8-fold rotational symmetry, all subunits are present with 8 copies or multiples thereof.

It is found in the cytoplasm. The protein resides in the cytoskeleton. The protein localises to the nucleus. It localises to the nuclear pore complex. Functionally, acts as one of several non-catalytic accessory components of the cytoplasmic dynein complex that are thought to be involved in linking dynein to cargos and to adapter proteins that regulate dynein function. Cytoplasmic dynein 1 acts as a motor for the intracellular retrograde motility of vesicles and organelles along microtubules. May play a role in changing or maintaining the spatial distribution of cytoskeletal structures. Also a component of the nuclear pore complex. The sequence is that of Dynein light chain 1, cytoplasmic (DYN2) from Candida glabrata (strain ATCC 2001 / BCRC 20586 / JCM 3761 / NBRC 0622 / NRRL Y-65 / CBS 138) (Yeast).